Consider the following 337-residue polypeptide: Adenylosuccinate synthetase (337 aa).

GTP is bound by residues 12 to 18 (GDEGKGK) and 42 to 44 (GHT). Aspartate 13 acts as the Proton acceptor in catalysis. Positions 13 and 42 each coordinate Mg(2+). IMP-binding positions include 13 to 16 (DEGK), 40 to 43 (NAGH), threonine 127, arginine 141, glutamine 179, threonine 194, and arginine 256. Histidine 43 serves as the catalytic Proton donor. Position 252–258 (252–258 (TVTGRRR)) interacts with substrate. GTP-binding positions include arginine 258, 284 to 286 (CLD), and 324 to 326 (STG).

The protein belongs to the adenylosuccinate synthetase family. As to quaternary structure, homodimer. Requires Mg(2+) as cofactor.

It localises to the cytoplasm. It catalyses the reaction IMP + L-aspartate + GTP = N(6)-(1,2-dicarboxyethyl)-AMP + GDP + phosphate + 2 H(+). It functions in the pathway purine metabolism; AMP biosynthesis via de novo pathway; AMP from IMP: step 1/2. In terms of biological role, plays an important role in the de novo pathway of purine nucleotide biosynthesis. Catalyzes the first committed step in the biosynthesis of AMP from IMP. The protein is Adenylosuccinate synthetase of Methanococcus maripaludis (strain C5 / ATCC BAA-1333).